The chain runs to 74 residues: Translational regulator CsrA (74 aa).

The protein belongs to the CsrA/RsmA family. In terms of assembly, homodimer; the beta-strands of each monomer intercalate to form a hydrophobic core, while the alpha-helices form wings that extend away from the core.

The protein localises to the cytoplasm. A translational regulator that binds mRNA to regulate translation initiation and/or mRNA stability. Usually binds in the 5'-UTR at or near the Shine-Dalgarno sequence preventing ribosome-binding, thus repressing translation. Its main target seems to be the major flagellin gene, while its function is anatagonized by FliW. The protein is Translational regulator CsrA of Oceanobacillus iheyensis (strain DSM 14371 / CIP 107618 / JCM 11309 / KCTC 3954 / HTE831).